A 246-amino-acid polypeptide reads, in one-letter code: UDP-N-acetyl-D-mannosaminuronic acid transferase (246 aa).

This sequence belongs to the glycosyltransferase 26 family.

It catalyses the reaction UDP-N-acetyl-alpha-D-mannosaminouronate + N-acetyl-alpha-D-glucosaminyl-di-trans,octa-cis-undecaprenyl diphosphate = beta-D-ManNAcA-(1-&gt;4)-alpha-D-GlcNAc-di-trans,octa-cis-undecaprenyl diphosphate + UDP + H(+). The protein operates within bacterial outer membrane biogenesis; enterobacterial common antigen biosynthesis. Functionally, catalyzes the synthesis of Und-PP-GlcNAc-ManNAcA (Lipid II), the second lipid-linked intermediate involved in enterobacterial common antigen (ECA) synthesis. In Escherichia coli (strain 55989 / EAEC), this protein is UDP-N-acetyl-D-mannosaminuronic acid transferase.